The following is a 941-amino-acid chain: MEESSSIAMLVQEIGEPEAVLTAEGVLSPSSEVDQQRKAKADPLVHVIQKLSKIVGHEKSQKCLLIGKKRPRPSETANSLEKLENCEIPAKATESPAAGVRKTEMSQASSTLASNDGKAMSYQCSLCKFLSPSFSVLKEHVKQHGQQHDVMLMCSECHATSRSQQELEAHVVSEHENSASSQARSSPSGQGATERKSETMVDIPVNMGSPQTHAVQSAAMAESGRRKWYAYEQYGMYRCLFCSYTCGQQRMLKTHAWKHAGEVNCSYPIFENENEPLGLLASSMSAAPGGVDAVVIAIGDSELSIHNGPSVQVQICSSDPPSSSPLEQSTEEGVHLNQAVTLDANEEEMLEVMSDSEENLFADSLLSSAQKIISSSPNKKGHVNVIVERLPSAEETLPPKHFLINAEMEEGKSPSPSEAQTGCVGAGNMYHADKCTVDIGGLIIGWSSAEKKDSELSKGLAPDENAPPGRRRTNSESLRLHSLAAEALVTMPIRAAELTRASLGHYGDINLLDPDTGQRQVSGPLATYSKKIMSPLKNSTDGVTSFNQSNSTVVALPEGRQELSDGQVKTGISMSLLTVIEKLRERTDQNASDDDILKELQDNAQCQPNSDGSLLGSNVVEYIPDAERPYRCRLCNYSSGNRGYIKQHLRVHRQRQPYQCPICEHIAENSKDLESHMINHCKTRIHQCKQCKESFHYKSQLRNHEREQHCLPNTLSVASNEPRISRDAADGKCAQEGNKPSTQKQYRCDVCDYTSTTYVGVRNHRRVHNSDKPYRCSLCGYVCSHPPSLKSHMWKHASDQNYNYEQVNKAINDAISQSARVLGKSRGKPLLTSSEERTGPTTGSPENLVSSSELTSQLPGEVMDASELEKLNPTGCSSDVSGRSCSLAAPGTEYCVLLFCCCICGFESTSKESLLDHMKEHEGEIVSIILNKDHSTALNAN.

Residue S95 is modified to Phosphoserine. 2 consecutive C2H2-type zinc fingers follow at residues 122-144 and 152-175; these read YQCS…VKQH and LMCS…VSEH. Basic and acidic residues predominate over residues 165–177; the sequence is QELEAHVVSEHEN. The tract at residues 165 to 198 is disordered; that stretch reads QELEAHVVSEHENSASSQARSSPSGQGATERKSE. The segment covering 178–192 has biased composition (low complexity); sequence SASSQARSSPSGQGA. The segment at 237 to 259 adopts a C2H2-type 3 zinc-finger fold; it reads YRCLFCSYTCGQQRMLKTHAWKH. The residue at position 415 (S415) is a Phosphoserine. A disordered region spans residues 455–477; the sequence is ELSKGLAPDENAPPGRRRTNSES. C2H2-type zinc fingers lie at residues 630-652, 658-680, 686-709, 746-768, and 774-796; these read YRCR…LRVH, YQCP…MINH, HQCK…REQH, YRCD…RRVH, and YRCS…MWKH. The segment at 823-856 is disordered; sequence GKSRGKPLLTSSEERTGPTTGSPENLVSSSELTS. The segment covering 839 to 856 has biased composition (polar residues); the sequence is GPTTGSPENLVSSSELTS. The segment at 899-921 adopts a C2H2-type 9 zinc-finger fold; it reads FCCCICGFESTSKESLLDHMKEH.

The protein belongs to the krueppel C2H2-type zinc-finger protein family.

Its subcellular location is the nucleus. Functionally, may be involved in transcriptional regulation. In Mus musculus (Mouse), this protein is Zinc finger protein 507 (Znf507).